Consider the following 257-residue polypeptide: Hydroxyacylglutathione hydrolase (257 aa).

Zn(2+)-binding residues include H54, H56, D58, H59, H113, D137, and H175.

It belongs to the metallo-beta-lactamase superfamily. Glyoxalase II family. Monomer. Zn(2+) is required as a cofactor.

It catalyses the reaction an S-(2-hydroxyacyl)glutathione + H2O = a 2-hydroxy carboxylate + glutathione + H(+). It participates in secondary metabolite metabolism; methylglyoxal degradation; (R)-lactate from methylglyoxal: step 2/2. In terms of biological role, thiolesterase that catalyzes the hydrolysis of S-D-lactoyl-glutathione to form glutathione and D-lactic acid. The protein is Hydroxyacylglutathione hydrolase of Rippkaea orientalis (strain PCC 8801 / RF-1) (Cyanothece sp. (strain PCC 8801)).